Here is a 494-residue protein sequence, read N- to C-terminus: Catalase A (494 aa).

Over residues 1–23 (MTDRPTITTTAGAPVPDNQNSLT) the composition is skewed to polar residues. The tract at residues 1–25 (MTDRPTITTTAGAPVPDNQNSLTAG) is disordered. Residues His55 and Asn127 contribute to the active site. Residue Tyr337 coordinates heme.

It belongs to the catalase family. Requires heme as cofactor.

It localises to the periplasm. It carries out the reaction 2 H2O2 = O2 + 2 H2O. Decomposes hydrogen peroxide into water and oxygen; serves to protect cells from the toxic effects of hydrogen peroxide. The protein is Catalase A (katA) of Rhizobium meliloti (strain 1021) (Ensifer meliloti).